The primary structure comprises 509 residues: Bifunctional purine biosynthesis protein PurH (509 aa).

In terms of domain architecture, MGS-like spans 1–145 (MIKRALISVF…KSFKDVVVIS (145 aa)).

This sequence belongs to the PurH family.

The enzyme catalyses (6R)-10-formyltetrahydrofolate + 5-amino-1-(5-phospho-beta-D-ribosyl)imidazole-4-carboxamide = 5-formamido-1-(5-phospho-D-ribosyl)imidazole-4-carboxamide + (6S)-5,6,7,8-tetrahydrofolate. It catalyses the reaction IMP + H2O = 5-formamido-1-(5-phospho-D-ribosyl)imidazole-4-carboxamide. It functions in the pathway purine metabolism; IMP biosynthesis via de novo pathway; 5-formamido-1-(5-phospho-D-ribosyl)imidazole-4-carboxamide from 5-amino-1-(5-phospho-D-ribosyl)imidazole-4-carboxamide (10-formyl THF route): step 1/1. It participates in purine metabolism; IMP biosynthesis via de novo pathway; IMP from 5-formamido-1-(5-phospho-D-ribosyl)imidazole-4-carboxamide: step 1/1. The polypeptide is Bifunctional purine biosynthesis protein PurH (Brachyspira hyodysenteriae (strain ATCC 49526 / WA1)).